The chain runs to 473 residues: Ribulose bisphosphate carboxylase large chain (473 aa).

Residues asparagine 116 and threonine 166 each coordinate substrate. Catalysis depends on lysine 168, which acts as the Proton acceptor. A substrate-binding site is contributed by lysine 170. Mg(2+) is bound by residues lysine 194, aspartate 196, and glutamate 197. Lysine 194 is subject to N6-carboxylysine. Histidine 287 acts as the Proton acceptor in catalysis. Positions 288, 320, and 372 each coordinate substrate.

It belongs to the RuBisCO large chain family. Type I subfamily. Heterohexadecamer of 8 large chains and 8 small chains. Mg(2+) serves as cofactor.

The enzyme catalyses 2 (2R)-3-phosphoglycerate + 2 H(+) = D-ribulose 1,5-bisphosphate + CO2 + H2O. It carries out the reaction D-ribulose 1,5-bisphosphate + O2 = 2-phosphoglycolate + (2R)-3-phosphoglycerate + 2 H(+). RuBisCO catalyzes two reactions: the carboxylation of D-ribulose 1,5-bisphosphate, the primary event in carbon dioxide fixation, as well as the oxidative fragmentation of the pentose substrate. Both reactions occur simultaneously and in competition at the same active site. The polypeptide is Ribulose bisphosphate carboxylase large chain (Halorhodospira halophila (strain DSM 244 / SL1) (Ectothiorhodospira halophila (strain DSM 244 / SL1))).